We begin with the raw amino-acid sequence, 977 residues long: Protein bicaudal C homolog 1 (977 aa).

Residues methionine 1–leucine 43 form a disordered region. 3 positions are modified to phosphoserine: serine 27, serine 32, and serine 45. 2 KH domains span residues arginine 134–isoleucine 201 and proline 286–leucine 350. Lysine 400 carries the N6-acetyllysine modification. A compositionally biased stretch (polar residues) spans serine 590–glutamate 621. Disordered regions lie at residues serine 590–glycine 622, glycine 667–arginine 702, and glutamate 794–glutamate 848. Phosphoserine is present on residues serine 614 and serine 681. Residues leucine 692 to arginine 702 are compositionally biased toward basic and acidic residues. Residues glutamate 794–serine 803 show a composition bias toward low complexity. Residues phenylalanine 875–asparagine 938 enclose the SAM domain.

Belongs to the BicC family. Interacts (via KH domains) with ANKS6 (via SAM domain) in an RNA-dependent manner. Interacts with ANKS3. As to expression, in the adult, predominantly expressed in heart and kidney. In 8 week old mice, expressed in growing primary oocytes and in the stromal cells of the theca.

It localises to the cytoplasm. In terms of biological role, putative RNA-binding protein. May be involved in regulating gene expression during embryonic development. The sequence is that of Protein bicaudal C homolog 1 (Bicc1) from Mus musculus (Mouse).